We begin with the raw amino-acid sequence, 304 residues long: Acetylxylan esterase A (304 aa).

The signal sequence occupies residues 1–19 (MVKLQYLLSILLYAYSCTA). Catalysis depends on S147, which acts as the Charge relay system. N-linked (GlcNAc...) asparagine glycosylation is present at N189.

Belongs to the carbohydrate esterase 1 (CE1) family. AxeA subfamily. As to quaternary structure, monomer.

It is found in the secreted. It catalyses the reaction Deacetylation of xylans and xylo-oligosaccharides.. The protein operates within glycan degradation; xylan degradation. Functionally, acetylxylan esterase involved in the hydrolysis of xylan, a major structural heterogeneous polysaccharide found in plant biomass representing the second most abundant polysaccharide in the biosphere, after cellulose. Degrades acetylated xylans by cleaving acetyl side groups from the hetero-xylan backbone. This is Acetylxylan esterase A (axeA) from Emericella nidulans (strain FGSC A4 / ATCC 38163 / CBS 112.46 / NRRL 194 / M139) (Aspergillus nidulans).